Here is a 637-residue protein sequence, read N- to C-terminus: Threonine--tRNA ligase (637 aa).

Positions 1–61 constitute a TGS domain; sequence MPNVKLPDGN…KEDCSLIIVT (61 aa). Residues 242 to 533 form a catalytic region; the sequence is DHRKLGKALD…LIEHYAGKLP (292 aa). The Zn(2+) site is built by C333, H384, and H510.

This sequence belongs to the class-II aminoacyl-tRNA synthetase family. In terms of assembly, homodimer. It depends on Zn(2+) as a cofactor.

It is found in the cytoplasm. The catalysed reaction is tRNA(Thr) + L-threonine + ATP = L-threonyl-tRNA(Thr) + AMP + diphosphate + H(+). Functionally, catalyzes the attachment of threonine to tRNA(Thr) in a two-step reaction: L-threonine is first activated by ATP to form Thr-AMP and then transferred to the acceptor end of tRNA(Thr). Also edits incorrectly charged L-seryl-tRNA(Thr). This chain is Threonine--tRNA ligase, found in Legionella pneumophila (strain Corby).